Reading from the N-terminus, the 208-residue chain is Calaxin (208 aa).

3 consecutive EF-hand domains span residues 64 to 99 (TDDM…FLHG), 100 to 135 (TLEE…SLLK), and 145 to 180 (GVKD…ENLL). The Ca(2+) site is built by aspartate 77, aspartate 79, aspartate 81, aspartate 113, asparagine 115, aspartate 117, tyrosine 119, glutamate 124, aspartate 158, aspartate 160, aspartate 162, lysine 164, and aspartate 169.

Component of the outer dynein arm-docking complex along with ODAD1, ODAD2, ODAD3 and ODAD4.

Its subcellular location is the cytoplasm. The protein resides in the cytoskeleton. It is found in the cilium axoneme. It localises to the cell projection. The protein localises to the cilium. Its subcellular location is the flagellum. Its function is as follows. Component of the outer dynein arm-docking complex (ODA-DC) that mediates outer dynein arms (ODA) binding onto the doublet microtubule. Seems to regulate the assembly of both ODAs and their axonemal docking complex onto ciliary microtubules. Regulates ciliary and flagellar motility and is required for cilia-driven determination of body laterality. The chain is Calaxin (clxn) from Xenopus laevis (African clawed frog).